A 1703-amino-acid chain; its full sequence is Protein TIC 214 (1703 aa).

Transmembrane regions (helical) follow at residues 39–61 (YYGF…TFFL), 67–87 (GIIC…SIYC), 90–110 (LYVM…YMFY), 138–158 (LLLD…NPVL), 174–194 (FFLT…INSI), and 220–240 (FSIL…VPLI). 2 disordered regions span residues 615 to 643 (GPRK…KERE) and 1431 to 1494 (TKEP…WKSK). The stretch at 618–660 (KGKLEDKEKEKEKAAQTQTEVKKEREKEKEERVIKRFQNQSDF) forms a coiled coil. The span at 619-643 (GKLEDKEKEKEKAAQTQTEVKKERE) shows a compositional bias: basic and acidic residues.

The protein belongs to the TIC214 family. As to quaternary structure, part of the Tic complex.

The protein resides in the plastid. Its subcellular location is the chloroplast inner membrane. In terms of biological role, involved in protein precursor import into chloroplasts. May be part of an intermediate translocation complex acting as a protein-conducting channel at the inner envelope. The protein is Protein TIC 214 of Psilotum nudum (Whisk fern).